The sequence spans 381 residues: MTAMDRLDHVSNQLAAKRQKKNPEGKPFRITVVGSGNWGSTIAKVVAENAKELPEEFHQIVKMWVFEEEVDGRKLTEIINTDHENVKYLPDVKLPDNIVAIPDIVDACADADIIIFNIPHQFLPKILAQLKGKVNPKARAISCLKGLEVTKDGCKLLSNYITEELGIYCGALSGANLAPEVARQKWSETTVAYRIPQDFRGEGKDVDQSVIRNLFHRPYFHVRVIDDVAGVSLSGALKNVIAMAAGFVEGLGWGDNAKSAVMRIGLVEMIKFAHMFFEDCQSTTFTHESAGVADIITTCAGGRNVRVGRYMAEHKVSGFEAEKVLLNGQSCQGLHTTREVYELLAAKNVIDEFPLFKATYQIIYEGLPMEKLPELLEASED.

The segment at Met1 to Pro27 is disordered. NAD(+) is bound by residues Gly34 to Gly39, Phe66, and Phe122. Lys145 provides a ligand contact to substrate. Ala178 contributes to the NAD(+) binding site. The active-site Proton acceptor is Lys238. The NAD(+) site is built by Arg303 and Gln332. Arg303–Asn304 contributes to the substrate binding site.

Belongs to the NAD-dependent glycerol-3-phosphate dehydrogenase family.

The enzyme catalyses sn-glycerol 3-phosphate + NAD(+) = dihydroxyacetone phosphate + NADH + H(+). This Pichia angusta (Yeast) protein is Glycerol-3-phosphate dehydrogenase [NAD(+)] (GPD).